A 258-amino-acid polypeptide reads, in one-letter code: Putative phosphoenolpyruvate synthase regulatory protein (258 aa).

146–153 serves as a coordination point for ADP; that stretch reads GVSRVGKT.

This sequence belongs to the pyruvate, phosphate/water dikinase regulatory protein family. PSRP subfamily.

The enzyme catalyses [pyruvate, water dikinase] + ADP = [pyruvate, water dikinase]-phosphate + AMP + H(+). It catalyses the reaction [pyruvate, water dikinase]-phosphate + phosphate + H(+) = [pyruvate, water dikinase] + diphosphate. Its function is as follows. Bifunctional serine/threonine kinase and phosphorylase involved in the regulation of the phosphoenolpyruvate synthase (PEPS) by catalyzing its phosphorylation/dephosphorylation. In Thiobacillus denitrificans (strain ATCC 25259 / T1), this protein is Putative phosphoenolpyruvate synthase regulatory protein.